Reading from the N-terminus, the 154-residue chain is uncharacterized protein (154 aa).

Residues 7–143 (RSELEKTAVQ…IFSFVGKAAD (137 aa)) enclose the HTH marR-type domain. The H-T-H motif DNA-binding region spans 57–80 (AGELGKKTGLSTGSVTALVDRLEK).

This is an uncharacterized protein from Bacillus subtilis (strain 168).